A 334-amino-acid polypeptide reads, in one-letter code: Porphobilinogen deaminase (334 aa).

Cys-250 carries the S-(dipyrrolylmethanemethyl)cysteine modification.

It belongs to the HMBS family. Monomer. Requires dipyrromethane as cofactor.

The catalysed reaction is 4 porphobilinogen + H2O = hydroxymethylbilane + 4 NH4(+). Its pathway is porphyrin-containing compound metabolism; protoporphyrin-IX biosynthesis; coproporphyrinogen-III from 5-aminolevulinate: step 2/4. Tetrapolymerization of the monopyrrole PBG into the hydroxymethylbilane pre-uroporphyrinogen in several discrete steps. This Cutibacterium acnes (strain DSM 16379 / KPA171202) (Propionibacterium acnes) protein is Porphobilinogen deaminase.